Consider the following 301-residue polypeptide: NDP-polyphosphate phosphotransferase 3 (301 aa).

A compositionally biased stretch (basic and acidic residues) spans 1-12 (MNRNGSTKDPRR). The segment at 1-21 (MNRNGSTKDPRRMTGAATGEI) is disordered.

This sequence belongs to the polyphosphate kinase 2 (PPK2) family. Class I subfamily. Requires Mg(2+) as cofactor.

The enzyme catalyses [phosphate](n) + ATP = [phosphate](n+1) + ADP. It catalyses the reaction [phosphate](n) + CTP = [phosphate](n+1) + CDP. The catalysed reaction is [phosphate](n) + GTP = [phosphate](n+1) + GDP. It carries out the reaction [phosphate](n) + UTP = [phosphate](n+1) + UDP. Functionally, uses inorganic polyphosphate (polyP) as a donor to convert NDP to NTP. PolyP hydrolysis is slightly faster with UDP, but it can also use ADP, GDP and CDP. This chain is NDP-polyphosphate phosphotransferase 3, found in Ruegeria pomeroyi (strain ATCC 700808 / DSM 15171 / DSS-3) (Silicibacter pomeroyi).